A 201-amino-acid polypeptide reads, in one-letter code: Lipopolysaccharide core heptose(II)-phosphate phosphatase (201 aa).

An N-terminal signal peptide occupies residues 1-33 (MLAFTLRFIKNKRYFAILAGALVIIAGLASQHA).

Belongs to the phosphoglycerate mutase family. Ais subfamily.

Its subcellular location is the periplasm. It participates in bacterial outer membrane biogenesis; lipopolysaccharide metabolism. Its function is as follows. Catalyzes the dephosphorylation of heptose(II) of the outer membrane lipopolysaccharide core. The protein is Lipopolysaccharide core heptose(II)-phosphate phosphatase of Salmonella typhi.